We begin with the raw amino-acid sequence, 154 residues long: Large ribosomal subunit protein uL13 (154 aa).

This sequence belongs to the universal ribosomal protein uL13 family. As to quaternary structure, part of the 50S ribosomal subunit.

Functionally, this protein is one of the early assembly proteins of the 50S ribosomal subunit, although it is not seen to bind rRNA by itself. It is important during the early stages of 50S assembly. The sequence is that of Large ribosomal subunit protein uL13 from Bartonella henselae (strain ATCC 49882 / DSM 28221 / CCUG 30454 / Houston 1) (Rochalimaea henselae).